The chain runs to 235 residues: Orotidine 5'-phosphate decarboxylase (235 aa).

Substrate-binding positions include Asp11, Lys33, 60–69, Thr119, Arg180, Gln189, Gly209, and Arg210; that span reads DLKFHDIPNT. Lys62 serves as the catalytic Proton donor.

Belongs to the OMP decarboxylase family. Type 1 subfamily. In terms of assembly, homodimer.

The enzyme catalyses orotidine 5'-phosphate + H(+) = UMP + CO2. It participates in pyrimidine metabolism; UMP biosynthesis via de novo pathway; UMP from orotate: step 2/2. Its function is as follows. Catalyzes the decarboxylation of orotidine 5'-monophosphate (OMP) to uridine 5'-monophosphate (UMP). In Alkalilimnicola ehrlichii (strain ATCC BAA-1101 / DSM 17681 / MLHE-1), this protein is Orotidine 5'-phosphate decarboxylase.